Here is a 281-residue protein sequence, read N- to C-terminus: Nucleoid occlusion protein (281 aa).

The segment at 1 to 26 (MKHPFSRLFSFGEKEQEEAGGKQERE) is disordered. The segment covering 12 to 26 (GEKEQEEAGGKQERE) has biased composition (basic and acidic residues). Residues 145 to 164 (EALAQRLGKGQSTIANKLRL) constitute a DNA-binding region (H-T-H motif).

This sequence belongs to the ParB family.

The protein localises to the cytoplasm. Its subcellular location is the nucleoid. Effects nucleoid occlusion by binding relatively nonspecifically to DNA and preventing the assembly of the division machinery in the vicinity of the nucleoid, especially under conditions that disturb the cell cycle. It helps to coordinate cell division and chromosome segregation by preventing the formation of the Z ring through the nucleoid, which would cause chromosome breakage. The chain is Nucleoid occlusion protein from Geobacillus thermodenitrificans (strain NG80-2).